The following is a 28-amino-acid chain: GLMDALKGAAKNLFASALDKLKCKVTGC.

Cysteine 23 and cysteine 28 are disulfide-bonded.

Expressed by the skin glands.

It localises to the secreted. Has antibacterial activity. This is Ranatuerin-2LTa from Rana latastei (Italian agile frog).